The chain runs to 429 residues: 5-methylthioadenosine/S-adenosylhomocysteine deaminase (429 aa).

Residues His65 and His67 each contribute to the Zn(2+) site. Substrate contacts are provided by Glu94 and His182. His209 contributes to the Zn(2+) binding site. Glu212 and Asp297 together coordinate substrate. Asp297 provides a ligand contact to Zn(2+).

This sequence belongs to the metallo-dependent hydrolases superfamily. MTA/SAH deaminase family. The cofactor is Zn(2+).

It catalyses the reaction S-adenosyl-L-homocysteine + H2O + H(+) = S-inosyl-L-homocysteine + NH4(+). The catalysed reaction is S-methyl-5'-thioadenosine + H2O + H(+) = S-methyl-5'-thioinosine + NH4(+). Its function is as follows. Catalyzes the deamination of 5-methylthioadenosine and S-adenosyl-L-homocysteine into 5-methylthioinosine and S-inosyl-L-homocysteine, respectively. Is also able to deaminate adenosine. This is 5-methylthioadenosine/S-adenosylhomocysteine deaminase from Clostridium tetani (strain Massachusetts / E88).